A 272-amino-acid chain; its full sequence is Cytochrome c oxidase subunit 3 (272 aa).

The next 7 membrane-spanning stretches (helical) occupy residues 23-43 (PWPF…VMYM), 45-65 (AYVN…LVMF), 91-111 (FGVI…FWAF), 137-157 (WEIP…VTWC), 169-189 (SVLS…FQAY), 210-230 (ATGF…VCLI), and 249-269 (AWYW…IYWW).

This sequence belongs to the cytochrome c oxidase subunit 3 family. As to quaternary structure, component of the cytochrome c oxidase (complex IV, CIV), a multisubunit enzyme composed of a catalytic core of 3 subunits and several supernumerary subunits. The complex exists as a monomer or a dimer and forms supercomplexes (SCs) in the inner mitochondrial membrane with ubiquinol-cytochrome c oxidoreductase (cytochrome b-c1 complex, complex III, CIII).

The protein resides in the mitochondrion inner membrane. It carries out the reaction 4 Fe(II)-[cytochrome c] + O2 + 8 H(+)(in) = 4 Fe(III)-[cytochrome c] + 2 H2O + 4 H(+)(out). Its function is as follows. Component of the cytochrome c oxidase, the last enzyme in the mitochondrial electron transport chain which drives oxidative phosphorylation. The respiratory chain contains 3 multisubunit complexes succinate dehydrogenase (complex II, CII), ubiquinol-cytochrome c oxidoreductase (cytochrome b-c1 complex, complex III, CIII) and cytochrome c oxidase (complex IV, CIV), that cooperate to transfer electrons derived from NADH and succinate to molecular oxygen, creating an electrochemical gradient over the inner membrane that drives transmembrane transport and the ATP synthase. Cytochrome c oxidase is the component of the respiratory chain that catalyzes the reduction of oxygen to water. Electrons originating from reduced cytochrome c in the intermembrane space (IMS) are transferred via the dinuclear copper A center (CU(A)) of subunit 2 and heme A of subunit 1 to the active site in subunit 1, a binuclear center (BNC) formed by heme A3 and copper B (CU(B)). The BNC reduces molecular oxygen to 2 water molecules using 4 electrons from cytochrome c in the IMS and 4 protons from the mitochondrial matrix. The chain is Cytochrome c oxidase subunit 3 (COX3) from Chondrus crispus (Carrageen Irish moss).